Consider the following 139-residue polypeptide: Large ribosomal subunit protein uL13 (139 aa).

This sequence belongs to the universal ribosomal protein uL13 family. In terms of assembly, part of the 50S ribosomal subunit.

In terms of biological role, this protein is one of the early assembly proteins of the 50S ribosomal subunit, although it is not seen to bind rRNA by itself. It is important during the early stages of 50S assembly. The polypeptide is Large ribosomal subunit protein uL13 (Methanococcoides burtonii (strain DSM 6242 / NBRC 107633 / OCM 468 / ACE-M)).